Reading from the N-terminus, the 282-residue chain is UDP-3-O-acyl-N-acetylglucosamine deacetylase (282 aa).

Zn(2+)-binding residues include H80, H240, and D244. H267 serves as the catalytic Proton donor.

Belongs to the LpxC family. It depends on Zn(2+) as a cofactor.

The protein localises to the plastid. It is found in the chloroplast. It catalyses the reaction a UDP-3-O-[(3R)-3-hydroxyacyl]-N-acetyl-alpha-D-glucosamine + H2O = a UDP-3-O-[(3R)-3-hydroxyacyl]-alpha-D-glucosamine + acetate. Its pathway is glycolipid biosynthesis; lipid IV(A) biosynthesis; lipid IV(A) from (3R)-3-hydroxytetradecanoyl-[acyl-carrier-protein] and UDP-N-acetyl-alpha-D-glucosamine: step 2/6. Catalyzes the hydrolysis of UDP-3-O-myristoyl-N-acetylglucosamine to form UDP-3-O-myristoylglucosamine and acetate. Involved in the biosynthesis of lipid A, a phosphorylated glycolipid that in bacteria anchors the lipopolysaccharide to the outer membrane of the cell. The target for the lipopolysaccharides produced in the chloroplast could either be the cell envelope of the eukaryote or the plastid membrane. This Cyanidium caldarium (Red alga) protein is UDP-3-O-acyl-N-acetylglucosamine deacetylase.